The chain runs to 88 residues: UPF0250 protein Sputcn32_2874 (88 aa).

This sequence belongs to the UPF0250 family.

This is UPF0250 protein Sputcn32_2874 from Shewanella putrefaciens (strain CN-32 / ATCC BAA-453).